A 112-amino-acid chain; its full sequence is Large ribosomal subunit protein eL30 (112 aa).

Belongs to the eukaryotic ribosomal protein eL30 family.

This Euphorbia esula (Leafy spurge) protein is Large ribosomal subunit protein eL30 (RPL30).